A 671-amino-acid polypeptide reads, in one-letter code: Oviduct-specific glycoprotein (671 aa).

Positions 1-21 (MGRLLLWVGLVLLMKPNDGTA) are cleaved as a signal peptide. The GH18 domain occupies 22–385 (YKLVCYFTNW…HILNELLVRA (364 aa)). Residues cysteine 26 and cysteine 51 are joined by a disulfide bond. Residues 71 to 72 (LQ), 98 to 101 (GGWN), tyrosine 142, 211 to 214 (LSYD), and tryptophan 355 each bind chitin. The N-linked (GlcNAc...) asparagine glycan is linked to asparagine 402. A run of 8 repeats spans residues 490 to 504 (TGMT…AGRE), 505 to 519 (TMTT…PGGE), 520 to 534 (TMTT…PGGE), 535 to 549 (TVTT…PGGE), 550 to 564 (TMTT…PGGE), 565 to 579 (TVTI…PVGE), 580 to 594 (TVTI…PGGQ), and 595 to 609 (TTAT…PPGM). Residues 490 to 609 (TGMTVTVQTQ…GSQSVTPPGM (120 aa)) form an 8 X 15 AA tandem repeats region. N-linked (GlcNAc...) asparagine glycans are attached at residues asparagine 511, asparagine 526, asparagine 541, asparagine 556, asparagine 571, and asparagine 586.

This sequence belongs to the glycosyl hydrolase 18 family. In terms of processing, highly O-glycosylated and also N-glycosylated. Oviduct.

The protein resides in the cytoplasmic vesicle. The protein localises to the secretory vesicle. Its function is as follows. Binds to oocyte zona pellucida in vivo. May play a role in the fertilization process and/or early embryonic development. Might act as a protective secretion influencing the first steps of the reproductive process necessary for the normal triggering of fertilization and early embryonic development. The protein is Oviduct-specific glycoprotein (OVGP1) of Mesocricetus auratus (Golden hamster).